Reading from the N-terminus, the 622-residue chain is Pesticidal crystal protein Cry2Ac (622 aa).

Belongs to the delta endotoxin family.

In terms of biological role, promotes colloidosmotic lysis by binding to the midgut epithelial cells of lepidopteran larvae. Has low activity on dipteran larvae. The polypeptide is Pesticidal crystal protein Cry2Ac (cry2Ac) (Bacillus thuringiensis).